The following is a 680-amino-acid chain: Chaperone protein dnaK3 (680 aa).

Threonine 205 bears the Phosphothreonine; by autocatalysis mark. Residues 640–680 (GRERRRDDDEDEWAEPPRTRRSRSYSQRADSAPWDDWDDDW) are disordered.

It belongs to the heat shock protein 70 family.

Acts as a chaperone. The chain is Chaperone protein dnaK3 (dnaK3) from Thermosynechococcus vestitus (strain NIES-2133 / IAM M-273 / BP-1).